A 663-amino-acid polypeptide reads, in one-letter code: Beta-galactosidase YesZ (663 aa).

Arg-106 provides a ligand contact to substrate. Residue Cys-110 participates in Zn(2+) binding. Asn-144 contributes to the substrate binding site. The active-site Proton donor is Glu-145. Zn(2+) is bound by residues Cys-153, Cys-155, and Cys-158. Glu-296 acts as the Nucleophile in catalysis. Glu-345–His-348 is a binding site for substrate.

The protein belongs to the glycosyl hydrolase 42 family. As to quaternary structure, homotrimer.

It catalyses the reaction Hydrolysis of terminal non-reducing beta-D-galactose residues in beta-D-galactosides.. May play a role in the degradation of rhamnogalacturonan derived from plant cell walls. In Bacillus subtilis (strain 168), this protein is Beta-galactosidase YesZ (yesZ).